The following is a 460-amino-acid chain: Light-independent protochlorophyllide reductase subunit N (460 aa).

[4Fe-4S] cluster contacts are provided by cysteine 20, cysteine 45, and cysteine 105.

This sequence belongs to the BchN/ChlN family. In terms of assembly, protochlorophyllide reductase is composed of three subunits; ChlL, ChlN and ChlB. Forms a heterotetramer of two ChlB and two ChlN subunits. [4Fe-4S] cluster serves as cofactor.

The protein localises to the plastid. It localises to the chloroplast. It carries out the reaction chlorophyllide a + oxidized 2[4Fe-4S]-[ferredoxin] + 2 ADP + 2 phosphate = protochlorophyllide a + reduced 2[4Fe-4S]-[ferredoxin] + 2 ATP + 2 H2O. Its pathway is porphyrin-containing compound metabolism; chlorophyll biosynthesis (light-independent). Component of the dark-operative protochlorophyllide reductase (DPOR) that uses Mg-ATP and reduced ferredoxin to reduce ring D of protochlorophyllide (Pchlide) to form chlorophyllide a (Chlide). This reaction is light-independent. The NB-protein (ChlN-ChlB) is the catalytic component of the complex. This Adiantum capillus-veneris (Maidenhair fern) protein is Light-independent protochlorophyllide reductase subunit N.